Consider the following 287-residue polypeptide: Urease accessory protein UreD (287 aa).

It belongs to the UreD family. UreD, UreF and UreG form a complex that acts as a GTP-hydrolysis-dependent molecular chaperone, activating the urease apoprotein by helping to assemble the nickel containing metallocenter of UreC. The UreE protein probably delivers the nickel.

It is found in the cytoplasm. Its function is as follows. Required for maturation of urease via the functional incorporation of the urease nickel metallocenter. In Aliivibrio fischeri (strain ATCC 700601 / ES114) (Vibrio fischeri), this protein is Urease accessory protein UreD.